Here is a 100-residue protein sequence, read N- to C-terminus: UPF0213 protein YhbQ (100 aa).

The region spanning 2 to 77 (TPWFLYLIRT…KQLTKRQKER (76 aa)) is the GIY-YIG domain.

Belongs to the UPF0213 family.

The protein is UPF0213 protein YhbQ of Escherichia coli O127:H6 (strain E2348/69 / EPEC).